The following is a 362-amino-acid chain: 5-amino-6-(D-ribitylamino)uracil--L-tyrosine 4-hydroxyphenyl transferase (362 aa).

The Radical SAM core domain occupies I48–S294. Residues C62, C66, and C69 each coordinate [4Fe-4S] cluster.

It belongs to the radical SAM superfamily. CofH family. As to quaternary structure, consists of two subunits, CofG and CofH. It depends on [4Fe-4S] cluster as a cofactor.

It carries out the reaction 5-amino-6-(D-ribitylamino)uracil + L-tyrosine + S-adenosyl-L-methionine = 5-amino-5-(4-hydroxybenzyl)-6-(D-ribitylimino)-5,6-dihydrouracil + 2-iminoacetate + 5'-deoxyadenosine + L-methionine + H(+). It functions in the pathway cofactor biosynthesis; coenzyme F0 biosynthesis. Functionally, catalyzes the radical-mediated synthesis of 5-amino-5-(4-hydroxybenzyl)-6-(D-ribitylimino)-5,6-dihydrouracil from 5-amino-6-(D-ribitylamino)uracil and L-tyrosine. This Methanococcus aeolicus (strain ATCC BAA-1280 / DSM 17508 / OCM 812 / Nankai-3) protein is 5-amino-6-(D-ribitylamino)uracil--L-tyrosine 4-hydroxyphenyl transferase.